A 156-amino-acid polypeptide reads, in one-letter code: Protein Smg homolog (156 aa).

It belongs to the Smg family.

The protein is Protein Smg homolog of Halorhodospira halophila (strain DSM 244 / SL1) (Ectothiorhodospira halophila (strain DSM 244 / SL1)).